Consider the following 361-residue polypeptide: G2/mitotic-specific cyclin-B1 (361 aa).

Over residues 1–13 the composition is skewed to polar residues; the sequence is MLRATNNRRTSNN. The tract at residues 1 to 33 is disordered; the sequence is MLRATNNRRTSNNVEKDSLQMAKHGNGPLKPVN.

This sequence belongs to the cyclin family. Cyclin AB subfamily. In terms of assembly, interacts with the CDK1 protein kinase to form a serine/threonine kinase holoenzyme complex also known as maturation promoting factor (MPF). The cyclin subunit imparts substrate specificity to the complex. Interacts with E3 ubiquitin-protein ligase etc-1. In terms of processing, ubiquitinated by etc-1 likely during meiosis, resulting in its degradation.

It localises to the cytoplasm. Essential for the control of the cell cycle at the G2/M (mitosis) transition. This chain is G2/mitotic-specific cyclin-B1 (cyb-1), found in Caenorhabditis elegans.